Reading from the N-terminus, the 359-residue chain is Serine hydrolase-like protein DDB_G0286239 (359 aa).

The AB hydrolase-1 domain occupies 38-289; the sequence is LALHGWLDNA…VPGSHHFHME (252 aa). S111 is an active-site residue. A disordered region spans residues 310–359; that stretch reads FTPSSTTQQQQQQQQSAENKKGDNHNQIAEQDLSTSNTSSPIISKPKPNL. The segment covering 334 to 351 has biased composition (polar residues); it reads HNQIAEQDLSTSNTSSPI.

The protein belongs to the AB hydrolase superfamily.

Probable serine hydrolase. This Dictyostelium discoideum (Social amoeba) protein is Serine hydrolase-like protein DDB_G0286239.